Consider the following 380-residue polypeptide: UDP-3-O-acylglucosamine N-acyltransferase (380 aa).

H263 serves as the catalytic Proton acceptor.

This sequence belongs to the transferase hexapeptide repeat family. LpxD subfamily. As to quaternary structure, homotrimer.

The catalysed reaction is a UDP-3-O-[(3R)-3-hydroxyacyl]-alpha-D-glucosamine + a (3R)-hydroxyacyl-[ACP] = a UDP-2-N,3-O-bis[(3R)-3-hydroxyacyl]-alpha-D-glucosamine + holo-[ACP] + H(+). It functions in the pathway bacterial outer membrane biogenesis; LPS lipid A biosynthesis. Catalyzes the N-acylation of UDP-3-O-acylglucosamine using 3-hydroxyacyl-ACP as the acyl donor. Is involved in the biosynthesis of lipid A, a phosphorylated glycolipid that anchors the lipopolysaccharide to the outer membrane of the cell. The chain is UDP-3-O-acylglucosamine N-acyltransferase from Rhodopirellula baltica (strain DSM 10527 / NCIMB 13988 / SH1).